The sequence spans 165 residues: Nucleotide-binding protein Rcas_1283 (165 aa).

This sequence belongs to the YajQ family.

Functionally, nucleotide-binding protein. The sequence is that of Nucleotide-binding protein Rcas_1283 from Roseiflexus castenholzii (strain DSM 13941 / HLO8).